The chain runs to 328 residues: Phenylalanine--tRNA ligase alpha subunit (328 aa).

Position 253 (E253) interacts with Mg(2+).

It belongs to the class-II aminoacyl-tRNA synthetase family. Phe-tRNA synthetase alpha subunit type 1 subfamily. As to quaternary structure, tetramer of two alpha and two beta subunits. Mg(2+) is required as a cofactor.

The protein localises to the cytoplasm. The catalysed reaction is tRNA(Phe) + L-phenylalanine + ATP = L-phenylalanyl-tRNA(Phe) + AMP + diphosphate + H(+). The chain is Phenylalanine--tRNA ligase alpha subunit from Chromobacterium violaceum (strain ATCC 12472 / DSM 30191 / JCM 1249 / CCUG 213 / NBRC 12614 / NCIMB 9131 / NCTC 9757 / MK).